A 1521-amino-acid chain; its full sequence is uncharacterized protein (1521 aa).

Disordered regions lie at residues 1–20 (MENN…NSNN), 85–124 (TFQS…NNNN), 218–254 (ASSP…SSSS), 431–482 (VLNS…TGIT), and 735–797 (NNNN…HQQQ). Composition is skewed to low complexity over residues 94-108 (NTSS…QNNP), 219-254 (SSPS…SSSS), and 431-454 (VLNS…NNTS). A compositionally biased stretch (polar residues) spans 455-464 (PAIVTSASIH). 2 stretches are compositionally biased toward low complexity: residues 465-482 (NSNG…TGIT) and 735-762 (NNNN…NNIL). The segment covering 763–774 (SNTLTSSLINEP) has biased composition (polar residues). Residues 775–788 (NQQHQHQQHQQQNQ) show a composition bias toward low complexity. Positions 853 to 903 (IVNSQQQQQQQQQQQQQQQQQQQQQQQQQQQQQQQQQQQQQQHNNTQNINN) form a coiled coil. The span at 1398–1453 (QQPLPTSKTSSSSSSTSSEATPYLSSSVPPSIVTSTPSTTPMISSSNPNTSSLPTS) shows a compositional bias: low complexity. A disordered region spans residues 1398–1455 (QQPLPTSKTSSSSSSTSSEATPYLSSSVPPSIVTSTPSTTPMISSSNPNTSSLPTSER).

This is an uncharacterized protein from Dictyostelium discoideum (Social amoeba).